Reading from the N-terminus, the 397-residue chain is CCA-adding enzyme (397 aa).

2 residues coordinate ATP: glycine 26 and arginine 29. CTP-binding residues include glycine 26 and arginine 29. The Mg(2+) site is built by aspartate 39 and aspartate 41. ATP is bound by residues arginine 110, aspartate 153, arginine 156, arginine 159, and arginine 162. 5 residues coordinate CTP: arginine 110, aspartate 153, arginine 156, arginine 159, and arginine 162.

The protein belongs to the tRNA nucleotidyltransferase/poly(A) polymerase family. Bacterial CCA-adding enzyme type 3 subfamily. As to quaternary structure, homodimer. Requires Mg(2+) as cofactor.

The catalysed reaction is a tRNA precursor + 2 CTP + ATP = a tRNA with a 3' CCA end + 3 diphosphate. It carries out the reaction a tRNA with a 3' CCA end + 2 CTP + ATP = a tRNA with a 3' CCACCA end + 3 diphosphate. Functionally, catalyzes the addition and repair of the essential 3'-terminal CCA sequence in tRNAs without using a nucleic acid template. Adds these three nucleotides in the order of C, C, and A to the tRNA nucleotide-73, using CTP and ATP as substrates and producing inorganic pyrophosphate. tRNA 3'-terminal CCA addition is required both for tRNA processing and repair. Also involved in tRNA surveillance by mediating tandem CCA addition to generate a CCACCA at the 3' terminus of unstable tRNAs. While stable tRNAs receive only 3'-terminal CCA, unstable tRNAs are marked with CCACCA and rapidly degraded. The polypeptide is CCA-adding enzyme (Bacillus cereus (strain AH187)).